The following is a 1191-amino-acid chain: Solute carrier family 12 member 2 (1191 aa).

Positions M1 to G166 are disordered. Over M1–G258 the chain is Cytoplasmic. Composition is skewed to low complexity over residues Q13 to Q25, K59 to A69, A80 to A99, and S131 to P141. Residues P142 to T155 are compositionally biased toward polar residues. Phosphothreonine; by OXSR1 and STK39 occurs at positions 175, 179, and 184. Phosphothreonine occurs at positions 189 and 202. A discontinuously helical transmembrane segment spans residues W259 to G288. L269 is a binding site for Na(+). 2 residues coordinate K(+): N270 and I271. W272 serves as a coordination point for Na(+). Residues G273, V274, and M275 each contribute to the chloride site. Residues I289–L308 form a helical membrane-spanning segment. Topologically, residues S309 to A339 are cytoplasmic. A helical transmembrane segment spans residues I340–L367. Chloride is bound at residue F344. Y355 is a binding site for K(+). Over V368–E377 the chain is Extracellular. The helical transmembrane segment at M378–E401 threads the bilayer. Residues W402–A404 are Cytoplasmic-facing. Residues K405 to F426 form a helical membrane-spanning segment. At I427–D458 the chain is on the extracellular side. Residues F459–G476 traverse the membrane as a discontinuously helical segment. K(+) is bound by residues P468, A469, and T471. Chloride-binding residues include P468 and A469. Chloride-binding residues include G472 and I473. Topologically, residues A477–P491 are cytoplasmic. A helical transmembrane segment spans residues K492–G513. The Extracellular portion of the chain corresponds to S514–G571. N-linked (GlcNAc...) asparagine glycosylation is found at N523 and N535. C536 and C541 are joined by a disulfide. The N-linked (GlcNAc...) asparagine glycan is linked to N546. C550 and C555 form a disulfide bridge. The chain crosses the membrane as a helical span at residues F572–P596. A583, S586, and S587 together coordinate Na(+). Residues K597–P624 lie on the Cytoplasmic side of the membrane. 2 helical membrane-spanning segments follow: residues L625–N645 and V646–F664. Chloride-binding residues include F655 and Y659. At S665–W687 the chain is on the cytoplasmic side. Transmembrane regions (helical) follow at residues I688–W705 and W706–L718. Residues Y719–S1191 lie on the Cytoplasmic side of the membrane. The tract at residues S734–T751 is scissor helix. Residues H929–E972 are disordered. The span at S935–P948 shows a compositional bias: low complexity. T1114 carries the post-translational modification Phosphothreonine.

This sequence belongs to the SLC12A transporter family. As to quaternary structure, homodimer. Post-translationally, phosphorylated at Thr-175, Thr-179 and Thr-184 by OXSR1/OSR1 and STK39/SPAK downstream of WNK kinases (WNK1, WNK2, WNK3 or WNK4), promoting its activity. In terms of tissue distribution, strongly expressed in rectal gland, brain, gill and intestine. Also detected at lower levels in heart, kidney, and testis.

It is found in the basolateral cell membrane. The enzyme catalyses K(+)(out) + 2 chloride(out) + Na(+)(out) = K(+)(in) + 2 chloride(in) + Na(+)(in). With respect to regulation, activated following phosphorylation by OXSR1/OSR1 and STK39/SPAK. Inhibited by bumetanide. Cation-chloride cotransporter which mediates the electroneutral transport of chloride, potassium and/or sodium ions across the membrane. Plays a vital role in the regulation of ionic balance and cell volume. The chain is Solute carrier family 12 member 2 (SLC12A2) from Squalus acanthias (Spiny dogfish).